An 892-amino-acid chain; its full sequence is Alanine--tRNA ligase (892 aa).

Zn(2+) is bound by residues histidine 574, histidine 578, cysteine 676, and histidine 680.

This sequence belongs to the class-II aminoacyl-tRNA synthetase family. Zn(2+) serves as cofactor.

The protein localises to the cytoplasm. The catalysed reaction is tRNA(Ala) + L-alanine + ATP = L-alanyl-tRNA(Ala) + AMP + diphosphate. Functionally, catalyzes the attachment of alanine to tRNA(Ala) in a two-step reaction: alanine is first activated by ATP to form Ala-AMP and then transferred to the acceptor end of tRNA(Ala). Also edits incorrectly charged Ser-tRNA(Ala) and Gly-tRNA(Ala) via its editing domain. The chain is Alanine--tRNA ligase from Prochlorococcus marinus (strain MIT 9303).